The chain runs to 237 residues: MIISFEKLGEKYKIIDLNLNSIKQKIGDSLNIKEIKPTKIICVGLNYIDHAKELNMEIPEYPIIFLKPTSAIIYNEDYIIRPRISKRVDYEVELAIVIGKKCKNIKKDEANDYIMGYTILNDVTARDLQQKDGQWTRAKSFDTFCPIGPRIVKDIDPMNLNIECRVNGEIKQKSNTKNMIFDVYELVEFVASIMTLYPGDIISTGTPPGVGELKAGDVVECEIEGIGILRNYVKDEE.

A divalent metal cation is bound by residues E91, E93, and D122.

This sequence belongs to the FAH family.

This is an uncharacterized protein from Methanocaldococcus jannaschii (strain ATCC 43067 / DSM 2661 / JAL-1 / JCM 10045 / NBRC 100440) (Methanococcus jannaschii).